The primary structure comprises 203 residues: Small ribosomal subunit protein uS4 (203 aa).

Positions arginine 93–valine 156 constitute an S4 RNA-binding domain.

The protein belongs to the universal ribosomal protein uS4 family. Part of the 30S ribosomal subunit. Contacts protein S5. The interaction surface between S4 and S5 is involved in control of translational fidelity.

Functionally, one of the primary rRNA binding proteins, it binds directly to 16S rRNA where it nucleates assembly of the body of the 30S subunit. With S5 and S12 plays an important role in translational accuracy. The protein is Small ribosomal subunit protein uS4 of Streptococcus pyogenes serotype M1.